Reading from the N-terminus, the 322-residue chain is Undecaprenyl-phosphate 4-deoxy-4-formamido-L-arabinose transferase (322 aa).

Residues 1–235 (MFEIHPVKKV…TCLTTTPLRM (235 aa)) are Cytoplasmic-facing. A helical transmembrane segment spans residues 236 to 256 (LSLLGSIIAIGGFSIAVLLVI). Residues 257–269 (LRLTFGPQWAAEG) are Periplasmic-facing. The helical transmembrane segment at 270–290 (VFMLFAVLFTFIGAQFIGMGL) threads the bilayer. The Cytoplasmic portion of the chain corresponds to 291 to 322 (LGEYIGRIYTDVRARPRYFVQQVIRPSSKENE).

The protein belongs to the glycosyltransferase 2 family.

The protein localises to the cell inner membrane. It carries out the reaction UDP-4-deoxy-4-formamido-beta-L-arabinose + di-trans,octa-cis-undecaprenyl phosphate = 4-deoxy-4-formamido-alpha-L-arabinopyranosyl di-trans,octa-cis-undecaprenyl phosphate + UDP. It functions in the pathway glycolipid biosynthesis; 4-amino-4-deoxy-alpha-L-arabinose undecaprenyl phosphate biosynthesis; 4-amino-4-deoxy-alpha-L-arabinose undecaprenyl phosphate from UDP-4-deoxy-4-formamido-beta-L-arabinose and undecaprenyl phosphate: step 1/2. It participates in bacterial outer membrane biogenesis; lipopolysaccharide biosynthesis. Catalyzes the transfer of 4-deoxy-4-formamido-L-arabinose from UDP to undecaprenyl phosphate. The modified arabinose is attached to lipid A and is required for resistance to polymyxin and cationic antimicrobial peptides. This is Undecaprenyl-phosphate 4-deoxy-4-formamido-L-arabinose transferase from Escherichia coli O45:K1 (strain S88 / ExPEC).